Reading from the N-terminus, the 404-residue chain is Cysteine desulfurase IscS (404 aa).

Pyridoxal 5'-phosphate is bound by residues 75–76 (AT), asparagine 155, glutamine 183, and 203–205 (SGH). The residue at position 206 (lysine 206) is an N6-(pyridoxal phosphate)lysine. Threonine 243 serves as a coordination point for pyridoxal 5'-phosphate. Cysteine 328 (cysteine persulfide intermediate) is an active-site residue. Cysteine 328 contributes to the [2Fe-2S] cluster binding site.

Belongs to the class-V pyridoxal-phosphate-dependent aminotransferase family. NifS/IscS subfamily. As to quaternary structure, homodimer. Forms a heterotetramer with IscU, interacts with other sulfur acceptors. It depends on pyridoxal 5'-phosphate as a cofactor.

The protein resides in the cytoplasm. It catalyses the reaction (sulfur carrier)-H + L-cysteine = (sulfur carrier)-SH + L-alanine. The protein operates within cofactor biosynthesis; iron-sulfur cluster biosynthesis. Its function is as follows. Master enzyme that delivers sulfur to a number of partners involved in Fe-S cluster assembly, tRNA modification or cofactor biosynthesis. Catalyzes the removal of elemental sulfur atoms from cysteine to produce alanine. Functions as a sulfur delivery protein for Fe-S cluster synthesis onto IscU, an Fe-S scaffold assembly protein, as well as other S acceptor proteins. The sequence is that of Cysteine desulfurase IscS from Shewanella frigidimarina (strain NCIMB 400).